A 601-amino-acid chain; its full sequence is Glutathione-regulated potassium-efflux system protein KefB (601 aa).

A run of 13 helical transmembrane segments spans residues 4 to 24, 29 to 49, 55 to 75, 87 to 107, 111 to 131, 152 to 172, 177 to 197, 207 to 227, 230 to 250, 262 to 282, 284 to 304, 324 to 344, and 356 to 376; these read ADLL…VPLA, IGAV…GLGF, EILH…GLEL, IFGV…GLLM, FLWQ…TAMA, VLLF…LLAG, HFDW…LIGG, FIAA…LVLS, LFMD…GVLL, AIDP…GMSL, LGVL…LVVI, MQFA…FSTA, and ALLL…MKGI. The RCK N-terminal domain maps to 400–519; sequence KPQVIVVGFG…AGVTQFSRET (120 aa).

It belongs to the monovalent cation:proton antiporter 2 (CPA2) transporter (TC 2.A.37) family. KefB subfamily. As to quaternary structure, interacts with the regulatory subunit KefG.

The protein localises to the cell inner membrane. Pore-forming subunit of a potassium efflux system that confers protection against electrophiles. Catalyzes K(+)/H(+) antiport. This Salmonella heidelberg (strain SL476) protein is Glutathione-regulated potassium-efflux system protein KefB.